Consider the following 78-residue polypeptide: MLKIRLKRFGRKRQPSYRIIVIDSRKPRDGRPIEEIGFYSPLNNKSKINLIQVKKRIYQGAQPTKKVQQIISQFEKQN.

It belongs to the bacterial ribosomal protein bS16 family.

It localises to the plastid. The protein resides in the chloroplast. This is Small ribosomal subunit protein bS16c from Gracilaria tenuistipitata var. liui (Red alga).